A 162-amino-acid polypeptide reads, in one-letter code: Shikimate kinase (162 aa).

Position 11–16 (11–16 (GSGKSS)) interacts with ATP. Serine 15 is a Mg(2+) binding site. The substrate site is built by aspartate 33, arginine 57, and glycine 80. Residues 109–123 (NQKEREKRPLLNNLT) form an LID domain region. Arginine 116 is a binding site for ATP. Residue arginine 132 coordinates substrate.

This sequence belongs to the shikimate kinase family. Monomer. Requires Mg(2+) as cofactor.

It is found in the cytoplasm. It carries out the reaction shikimate + ATP = 3-phosphoshikimate + ADP + H(+). Its pathway is metabolic intermediate biosynthesis; chorismate biosynthesis; chorismate from D-erythrose 4-phosphate and phosphoenolpyruvate: step 5/7. In terms of biological role, catalyzes the specific phosphorylation of the 3-hydroxyl group of shikimic acid using ATP as a cosubstrate. This is Shikimate kinase (aroK) from Helicobacter pylori (strain ATCC 700392 / 26695) (Campylobacter pylori).